Consider the following 89-residue polypeptide: Small ribosomal subunit protein uS15 (89 aa).

Belongs to the universal ribosomal protein uS15 family. Part of the 30S ribosomal subunit. Forms a bridge to the 50S subunit in the 70S ribosome, contacting the 23S rRNA.

In terms of biological role, one of the primary rRNA binding proteins, it binds directly to 16S rRNA where it helps nucleate assembly of the platform of the 30S subunit by binding and bridging several RNA helices of the 16S rRNA. Its function is as follows. Forms an intersubunit bridge (bridge B4) with the 23S rRNA of the 50S subunit in the ribosome. The chain is Small ribosomal subunit protein uS15 from Pseudomonas savastanoi pv. phaseolicola (strain 1448A / Race 6) (Pseudomonas syringae pv. phaseolicola (strain 1448A / Race 6)).